The following is a 129-amino-acid chain: MSIIEIITDSSINTTTDIGIVNLTQIEPLLCGFITIDTGNVYDLISSACMFMKQFSPYNLRLFESSYIEENTMTFIRVNSENPAYFVCRVNSLGNDNNEEKIQKIKNNLEINFLYNNIIHDESNILIIG.

This is an uncharacterized protein from Invertebrate iridescent virus 6 (IIV-6).